The following is a 498-amino-acid chain: Glutamate--tRNA ligase (498 aa).

The short motif at 11–21 is the 'HIGH' region element; sequence PSPTGHLHIGN. The 'KMSKS' region signature appears at 260–264; sequence KLSKR. ATP is bound at residue Lys-263.

It belongs to the class-I aminoacyl-tRNA synthetase family. Glutamate--tRNA ligase type 1 subfamily. In terms of assembly, monomer.

Its subcellular location is the cytoplasm. It carries out the reaction tRNA(Glu) + L-glutamate + ATP = L-glutamyl-tRNA(Glu) + AMP + diphosphate. Catalyzes the attachment of glutamate to tRNA(Glu) in a two-step reaction: glutamate is first activated by ATP to form Glu-AMP and then transferred to the acceptor end of tRNA(Glu). The sequence is that of Glutamate--tRNA ligase from Leuconostoc mesenteroides subsp. mesenteroides (strain ATCC 8293 / DSM 20343 / BCRC 11652 / CCM 1803 / JCM 6124 / NCDO 523 / NBRC 100496 / NCIMB 8023 / NCTC 12954 / NRRL B-1118 / 37Y).